Here is a 367-residue protein sequence, read N- to C-terminus: tRNA/tmRNA (uracil-C(5))-methyltransferase (367 aa).

S-adenosyl-L-methionine-binding residues include Gln190, Tyr218, Asn223, Glu239, and Asp299. Cys324 (nucleophile) is an active-site residue. Glu358 functions as the Proton acceptor in the catalytic mechanism.

This sequence belongs to the class I-like SAM-binding methyltransferase superfamily. RNA M5U methyltransferase family. TrmA subfamily.

The catalysed reaction is uridine(54) in tRNA + S-adenosyl-L-methionine = 5-methyluridine(54) in tRNA + S-adenosyl-L-homocysteine + H(+). It catalyses the reaction uridine(341) in tmRNA + S-adenosyl-L-methionine = 5-methyluridine(341) in tmRNA + S-adenosyl-L-homocysteine + H(+). Dual-specificity methyltransferase that catalyzes the formation of 5-methyluridine at position 54 (m5U54) in all tRNAs, and that of position 341 (m5U341) in tmRNA (transfer-mRNA). The sequence is that of tRNA/tmRNA (uracil-C(5))-methyltransferase from Erwinia tasmaniensis (strain DSM 17950 / CFBP 7177 / CIP 109463 / NCPPB 4357 / Et1/99).